Consider the following 221-residue polypeptide: Transcription factor bHLH126 (221 aa).

2 disordered regions span residues 1 to 46 (MDPY…KKLL) and 104 to 132 (RRDELSRETGQGYKSNPDPGKTGSDVGKS). A bHLH domain is found at 42-94 (KKKLLHRDIERQRRQEMATLFATLRTHLPLKYIKGKRAVSDHVNGAVNFIKDT).

Homodimer.

It is found in the nucleus. The polypeptide is Transcription factor bHLH126 (BHLH126) (Arabidopsis thaliana (Mouse-ear cress)).